The following is a 151-amino-acid chain: Transcriptional regulator MraZ (151 aa).

SpoVT-AbrB domains lie at 5–52 (ANAI…PLDE) and 81–124 (AVDL…DEDA).

Belongs to the MraZ family. Forms oligomers.

It localises to the cytoplasm. The protein localises to the nucleoid. In Pseudomonas fluorescens (strain Pf0-1), this protein is Transcriptional regulator MraZ.